Consider the following 343-residue polypeptide: DNA repair and recombination protein RadA (343 aa).

Gly-107–Ser-114 lines the ATP pocket.

The protein belongs to the eukaryotic RecA-like protein family.

In terms of biological role, involved in DNA repair and in homologous recombination. Binds and assemble on single-stranded DNA to form a nucleoprotein filament. Hydrolyzes ATP in a ssDNA-dependent manner and promotes DNA strand exchange between homologous DNA molecules. The polypeptide is DNA repair and recombination protein RadA (Halobacterium salinarum (strain ATCC 29341 / DSM 671 / R1)).